A 467-amino-acid polypeptide reads, in one-letter code: Uronate isomerase (467 aa).

This sequence belongs to the metallo-dependent hydrolases superfamily. Uronate isomerase family.

The catalysed reaction is D-glucuronate = D-fructuronate. The enzyme catalyses aldehydo-D-galacturonate = keto-D-tagaturonate. It participates in carbohydrate metabolism; pentose and glucuronate interconversion. The polypeptide is Uronate isomerase (Histophilus somni (strain 2336) (Haemophilus somnus)).